The chain runs to 747 residues: Catalase-peroxidase 1 (747 aa).

The span at 1–22 (MTDTSDARPPHSDDKTRSHSES) shows a compositional bias: basic and acidic residues. The disordered stretch occupies residues 1–39 (MTDTSDARPPHSDDKTRSHSESENPAIDSPEPKVHAPLT). The segment at residues 112 to 240 (WHAAGTYRIF…FGATTMGLIY (129 aa)) is a cross-link (tryptophyl-tyrosyl-methioninium (Trp-Tyr) (with M-266)). His-113 acts as the Proton acceptor in catalysis. A cross-link (tryptophyl-tyrosyl-methioninium (Tyr-Met) (with W-112)) is located at residues 240–266 (YVNPEGPEGKPDPLAAAHDIRETFGRM). His-281 serves as a coordination point for heme b.

It belongs to the peroxidase family. Peroxidase/catalase subfamily. As to quaternary structure, homodimer or homotetramer. Requires heme b as cofactor. In terms of processing, formation of the three residue Trp-Tyr-Met cross-link is important for the catalase, but not the peroxidase activity of the enzyme.

The enzyme catalyses H2O2 + AH2 = A + 2 H2O. It catalyses the reaction 2 H2O2 = O2 + 2 H2O. Its function is as follows. Bifunctional enzyme with both catalase and broad-spectrum peroxidase activity. The protein is Catalase-peroxidase 1 of Mycolicibacterium vanbaalenii (strain DSM 7251 / JCM 13017 / BCRC 16820 / KCTC 9966 / NRRL B-24157 / PYR-1) (Mycobacterium vanbaalenii).